Here is a 606-residue protein sequence, read N- to C-terminus: Probable potassium transport system protein Kup 2 (606 aa).

Helical transmembrane passes span 18–38, 46–66, 97–117, 140–160, 169–189, 204–224, 247–267, 286–306, 339–359, 368–388, 395–415, and 418–438; these read GLVFGDIGTSPIYTLTVIMTL, VLGILSLIVWTLIILVSVEYA, VAFVGFLAFMGVSLLLGDGII, AQGVLIFIAAVIALILFIFQF, AFGPIMVIWFGALTLSGIVSI, AVTFLMHNGLAGFFILSEVIL, AWYFVFSALVINYLGQGAFIL, ILYIPFLCLTIMATIIASQAL, IYIGSVNWSLLVAVIFIMLIF, AYGLAVTGTMFITGIMMTMIF, WKVPIALAVTLIDLVYLTANF, and LPHGGYWSLILASIPLAIMII.

This sequence belongs to the HAK/KUP transporter (TC 2.A.72) family.

It localises to the cell inner membrane. The catalysed reaction is K(+)(in) + H(+)(in) = K(+)(out) + H(+)(out). Its function is as follows. Transport of potassium into the cell. Likely operates as a K(+):H(+) symporter. This Geobacter metallireducens (strain ATCC 53774 / DSM 7210 / GS-15) protein is Probable potassium transport system protein Kup 2.